Reading from the N-terminus, the 188-residue chain is Pyridoxal 5'-phosphate synthase subunit PdxT (188 aa).

46–48 (GES) contacts L-glutamine. The active-site Nucleophile is the Cys-78. L-glutamine contacts are provided by residues Arg-105 and 134-135 (IR). Catalysis depends on charge relay system residues His-170 and Glu-172.

It belongs to the glutaminase PdxT/SNO family. In terms of assembly, in the presence of PdxS, forms a dodecamer of heterodimers. Only shows activity in the heterodimer.

The enzyme catalyses aldehydo-D-ribose 5-phosphate + D-glyceraldehyde 3-phosphate + L-glutamine = pyridoxal 5'-phosphate + L-glutamate + phosphate + 3 H2O + H(+). The catalysed reaction is L-glutamine + H2O = L-glutamate + NH4(+). It participates in cofactor biosynthesis; pyridoxal 5'-phosphate biosynthesis. In terms of biological role, catalyzes the hydrolysis of glutamine to glutamate and ammonia as part of the biosynthesis of pyridoxal 5'-phosphate. The resulting ammonia molecule is channeled to the active site of PdxS. The protein is Pyridoxal 5'-phosphate synthase subunit PdxT of Thermotoga neapolitana (strain ATCC 49049 / DSM 4359 / NBRC 107923 / NS-E).